A 328-amino-acid chain; its full sequence is 3-ketodihydrosphingosine reductase TSC10 (328 aa).

Position 16 (Leu-16) interacts with NADP(+). 3 residues coordinate NADPH: Gly-19, Ser-21, and Gly-23. The GXSXG signature appears at 19–23 (GASQG). Position 24 (Leu-24) interacts with NADP(+). 3 residues coordinate NADPH: Arg-44, Lys-48, and Asp-73. Asp-73 is a binding site for NADP(+). Ser-161 (proton donor) is an active-site residue. NADP(+) contacts are provided by Tyr-175, Lys-179, and Ser-210. The active-site Proton acceptor is Tyr-175. The Lowers pKa of active site Tyr role is filled by Lys-179. The chain crosses the membrane as a helical span at residues 277-297 (FFQVIVSFIFSIIAPIANYVV).

This sequence belongs to the short-chain dehydrogenases/reductases (SDR) family.

The protein localises to the endoplasmic reticulum membrane. It catalyses the reaction sphinganine + NADP(+) = 3-oxosphinganine + NADPH + H(+). Its pathway is lipid metabolism; sphingolipid metabolism. Its function is as follows. Catalyzes the reduction of 3'-oxosphinganine (3-ketodihydrosphingosine/KDS) to sphinganine (dihydrosphingosine/DHS), the second step of de novo sphingolipid biosynthesis. The sequence is that of 3-ketodihydrosphingosine reductase TSC10 (TSC10) from Debaryomyces hansenii (strain ATCC 36239 / CBS 767 / BCRC 21394 / JCM 1990 / NBRC 0083 / IGC 2968) (Yeast).